We begin with the raw amino-acid sequence, 253 residues long: REF/SRPP-like protein OsI_017815 (253 aa).

The disordered stretch occupies residues 1-26; that stretch reads MADSGSDAPISNRPEEEVTVEKTPEM. Residues 13–26 are compositionally biased toward basic and acidic residues; sequence RPEEEVTVEKTPEM.

This sequence belongs to the REF/SRPP family.

The chain is REF/SRPP-like protein OsI_017815 from Oryza sativa subsp. indica (Rice).